The primary structure comprises 221 residues: Thyrotroph embryonic factor (221 aa).

The segment at 72 to 116 is disordered; it reads ESASSSTASPPSSSTAVFQPSETVSSTESSLEKERETPSPIDPNC. Low complexity predominate over residues 73–100; the sequence is SASSSTASPPSSSTAVFQPSETVSSTES. In terms of domain architecture, bZIP spans 173–221; it reads DEKYWTRRKKNNVAAKRSRDARRLKENQITIRAAFLEKENTALRTEVAD. The segment at 175 to 195 is basic motif; it reads KYWTRRKKNNVAAKRSRDARR. Residues 196 to 203 are leucine-zipper; it reads LKENQITI.

The protein belongs to the bZIP family. PAR subfamily. In terms of assembly, binds DNA as a homodimer or a heterodimer. Can form a heterodimer with DBP.

Its subcellular location is the nucleus. Transcription factor that binds to and transactivates the TSHB promoter. Binds to a minimal DNA-binding sequence 5'-[TC][AG][AG]TTA[TC][AG]-3'. The chain is Thyrotroph embryonic factor (TEF) from Phodopus sungorus (Striped hairy-footed hamster).